A 480-amino-acid polypeptide reads, in one-letter code: tRNA-2-methylthio-N(6)-dimethylallyladenosine synthase (480 aa).

The MTTase N-terminal domain occupies 31–151 (RGLHVITWGC…LPEMVARAAR (121 aa)). [4Fe-4S] cluster contacts are provided by Cys40, Cys76, Cys114, Cys192, Cys196, and Cys199. The Radical SAM core domain occupies 178–410 (SPGGITSFLT…QALLRTQQDA (233 aa)). Positions 413 to 475 (DGTVGHVVPV…TNSLSGTLVQ (63 aa)) constitute a TRAM domain.

The protein belongs to the methylthiotransferase family. MiaB subfamily. In terms of assembly, monomer. [4Fe-4S] cluster is required as a cofactor.

Its subcellular location is the cytoplasm. It catalyses the reaction N(6)-dimethylallyladenosine(37) in tRNA + (sulfur carrier)-SH + AH2 + 2 S-adenosyl-L-methionine = 2-methylsulfanyl-N(6)-dimethylallyladenosine(37) in tRNA + (sulfur carrier)-H + 5'-deoxyadenosine + L-methionine + A + S-adenosyl-L-homocysteine + 2 H(+). Functionally, catalyzes the methylthiolation of N6-(dimethylallyl)adenosine (i(6)A), leading to the formation of 2-methylthio-N6-(dimethylallyl)adenosine (ms(2)i(6)A) at position 37 in tRNAs that read codons beginning with uridine. The protein is tRNA-2-methylthio-N(6)-dimethylallyladenosine synthase of Gluconacetobacter diazotrophicus (strain ATCC 49037 / DSM 5601 / CCUG 37298 / CIP 103539 / LMG 7603 / PAl5).